The chain runs to 712 residues: Serrate RNA effector molecule homolog (712 aa).

Disordered stretches follow at residues 1 to 80 (MVDS…DSIY), 214 to 256 (ADIK…TEKS), and 620 to 712 (QRPV…DDIP). Basic and acidic residues-rich tracts occupy residues 8-26 (GDRR…DYRR) and 34-54 (YDNK…SRGD). Residues 65–79 (RSGNGSDLPTESDSI) are compositionally biased toward polar residues. The span at 214–236 (ADIKKDENGNGTEQPKEEPEVKQ) shows a compositional bias: basic and acidic residues. Residues 240-251 (ATEELEEGAIED) show a composition bias toward acidic residues. 2 stretches are compositionally biased toward basic and acidic residues: residues 621–637 (RPVD…DHRG) and 645–655 (GYGRERDDDRG). Over residues 656-668 (PGGGGRNSFGGGG) the composition is skewed to gly residues.

This sequence belongs to the ARS2 family.

The protein localises to the nucleus. Acts as a mediator between the cap-binding complex (CBC) and the primary microRNAs (miRNAs) processing machinery. Contributes to the stability and delivery of capped primary miRNA transcripts to the primary miRNA processing complex, thereby playing a role in RNA-mediated gene silencing (RNAi) by miRNAs. The polypeptide is Serrate RNA effector molecule homolog (Caenorhabditis elegans).